The primary structure comprises 100 residues: MIREECLLKVLRAPHVSEKASTAMEKSNTIVLKVAKDATKAEIKAAVQKLFEVEVEVVNTLVVKGKVKRHGQRIGRRSDWKKAYVTLKEGQNLDFVGGAE.

Belongs to the universal ribosomal protein uL23 family. As to quaternary structure, part of the 50S ribosomal subunit. Contacts protein L29, and trigger factor when it is bound to the ribosome.

Functionally, one of the early assembly proteins it binds 23S rRNA. One of the proteins that surrounds the polypeptide exit tunnel on the outside of the ribosome. Forms the main docking site for trigger factor binding to the ribosome. The chain is Large ribosomal subunit protein uL23 from Shigella dysenteriae serotype 1 (strain Sd197).